The following is a 219-amino-acid chain: Rho-related protein racN (219 aa).

Residue 12–19 participates in GTP binding; that stretch reads GDVTIGKT. Residues 33 to 41 carry the Effector region motif; that stretch reads YIPTIFDNH. GTP contacts are provided by residues 58-62 and 114-117; these read DTGGG and TKTD. Cysteine methyl ester is present on C216. C216 carries S-geranylgeranyl cysteine lipidation. The propeptide at 217–219 is removed in mature form; the sequence is IIC.

Belongs to the small GTPase superfamily. Rho family.

It localises to the cell membrane. This Dictyostelium discoideum (Social amoeba) protein is Rho-related protein racN (racN).